We begin with the raw amino-acid sequence, 539 residues long: Phosphoenolpyruvate carboxykinase (ATP) (539 aa).

Substrate is bound by residues Arg-64, Tyr-206, and Lys-212. ATP is bound by residues Lys-212, His-231, and 247 to 255; that span reads GLSGTGKTT. Mn(2+) contacts are provided by Lys-212 and His-231. Asp-268 contributes to the Mn(2+) binding site. Residues Glu-296, Arg-332, 448–449, and Thr-454 each bind ATP; that span reads RI. Arg-332 is a binding site for substrate.

Belongs to the phosphoenolpyruvate carboxykinase (ATP) family. As to quaternary structure, monomer. Mn(2+) serves as cofactor.

It is found in the cytoplasm. It carries out the reaction oxaloacetate + ATP = phosphoenolpyruvate + ADP + CO2. It participates in carbohydrate biosynthesis; gluconeogenesis. Involved in the gluconeogenesis. Catalyzes the conversion of oxaloacetate (OAA) to phosphoenolpyruvate (PEP) through direct phosphoryl transfer between the nucleoside triphosphate and OAA. The protein is Phosphoenolpyruvate carboxykinase (ATP) of Yersinia pseudotuberculosis serotype O:1b (strain IP 31758).